A 185-amino-acid chain; its full sequence is Ribosome-recycling factor (185 aa).

It belongs to the RRF family.

It is found in the cytoplasm. Functionally, responsible for the release of ribosomes from messenger RNA at the termination of protein biosynthesis. May increase the efficiency of translation by recycling ribosomes from one round of translation to another. This chain is Ribosome-recycling factor, found in Geotalea daltonii (strain DSM 22248 / JCM 15807 / FRC-32) (Geobacter daltonii).